We begin with the raw amino-acid sequence, 219 residues long: uncharacterized protein (219 aa).

This is an uncharacterized protein from Rickettsia prowazekii (strain Madrid E).